The primary structure comprises 59 residues: MPVPKKKTSKARSRRRYAVWLGKAKLQAQRAMTIGRAILSGRNTGFYYPKAKSEEDEEE.

Belongs to the bacterial ribosomal protein bL32 family.

The sequence is that of Large ribosomal subunit protein bL32 from Synechococcus sp. (strain JA-2-3B'a(2-13)) (Cyanobacteria bacterium Yellowstone B-Prime).